A 235-amino-acid polypeptide reads, in one-letter code: Fms-related tyrosine kinase 3 ligand (235 aa).

A signal peptide spans 1–26; sequence MTVLAPAWSPTTYLLLLLLLSSGLSG. Topologically, residues 27 to 184 are extracellular; it reads TQDCSFQHSP…EATAPTAPQP (158 aa). 3 cysteine pairs are disulfide-bonded: C30/C111, C70/C153, and C119/C158. 2 N-linked (GlcNAc...) asparagine glycosylation sites follow: N126 and N149. The helical transmembrane segment at 185–205 threads the bilayer; sequence PLLLLLLLPVGLLLLAAAWCL. Over 206 to 235 the chain is Cytoplasmic; that stretch reads HWQRTRRRTPRPGEQVPPVPSPQDLLLVEH. The disordered stretch occupies residues 213 to 235; the sequence is RTPRPGEQVPPVPSPQDLLLVEH.

In terms of assembly, homodimer (isoform 2).

It is found in the cell membrane. The protein resides in the secreted. Stimulates the proliferation of early hematopoietic cells by activating FLT3. Synergizes well with a number of other colony stimulating factors and interleukins. Required for the development of B cells, and dendritic cells (DCs). The chain is Fms-related tyrosine kinase 3 ligand (FLT3LG) from Homo sapiens (Human).